We begin with the raw amino-acid sequence, 128 residues long: UPF0102 protein MAV_3752 (128 aa).

It belongs to the UPF0102 family.

The chain is UPF0102 protein MAV_3752 from Mycobacterium avium (strain 104).